The sequence spans 290 residues: Nucleoid occlusion protein (290 aa).

Positions 153–172 (EALAQRLGKGQSTIANKLRL) form a DNA-binding region, H-T-H motif.

It belongs to the ParB family.

Its subcellular location is the cytoplasm. It is found in the nucleoid. Effects nucleoid occlusion by binding relatively nonspecifically to DNA and preventing the assembly of the division machinery in the vicinity of the nucleoid, especially under conditions that disturb the cell cycle. It helps to coordinate cell division and chromosome segregation by preventing the formation of the Z ring through the nucleoid, which would cause chromosome breakage. This chain is Nucleoid occlusion protein, found in Bacillus cereus (strain ATCC 10987 / NRS 248).